Reading from the N-terminus, the 254-residue chain is Ribosomal RNA small subunit methyltransferase J (254 aa).

S-adenosyl-L-methionine is bound by residues 107–108 (RD), 123–124 (ER), and Asp174.

This sequence belongs to the methyltransferase superfamily. RsmJ family.

It is found in the cytoplasm. The catalysed reaction is guanosine(1516) in 16S rRNA + S-adenosyl-L-methionine = N(2)-methylguanosine(1516) in 16S rRNA + S-adenosyl-L-homocysteine + H(+). Functionally, specifically methylates the guanosine in position 1516 of 16S rRNA. The polypeptide is Ribosomal RNA small subunit methyltransferase J (Coxiella burnetii (strain CbuK_Q154) (Coxiella burnetii (strain Q154))).